Here is a 637-residue protein sequence, read N- to C-terminus: Transcription factor GLABRA 3 (637 aa).

Residues Asp437–Leu486 form the bHLH domain. Positions Arg497–Arg521 are disordered. Residues Asn541–Cys637 are binding with MYB0/GL1 and MYB23.

As to quaternary structure, efficient DNA binding requires dimerization with another bHLH protein. Homodimer and heterodimer with BHLH2. Interacts directly with TTG1 and MYB0/GL1 to form a complex. Its interaction with TRY prevents MYB0/GL1 binding. Interacts with MYB75/PAP1, MYB90/PAP2, TT2, CPC, MYB23 and MYB66/WER. Interacts with MYB82. As to expression, mostly expressed in roots and flowers. Also present in stems and leaves, and, to a lower extent, in hypocotyls. Expressed in epidermal root hair cells (trichoblasts) and moves to root hairless cells (atrichoblasts) by a cell-to-cell movement through plasmodesmata (at protein level).

It localises to the nucleus. In terms of biological role, transcription activator, when associated with MYB75/PAP1, MYB90/PAP2 or TT2. Involved in epidermal cell fate specification. Negatively regulates stomata formation, but, in association with TTG1 and MYB0/GL1, promotes trichome formation, branching and endoreplication. Also regulates trichome cell wall maturation. Together with MYB66/WER, promotes the formation of non-hair cells in root epidermis cells in the N position. Whereas together with CPC, promotes the formation of hair cells in root epidermis cells in the H position by inhibiting non-hair cell formation. Also seems to play a role in the activation of anthocyanin biosynthesis, probably together with MYB75/PAP1. Activates the transcription of GL2. This Arabidopsis thaliana (Mouse-ear cress) protein is Transcription factor GLABRA 3 (GL3).